The following is a 179-amino-acid chain: Hypoxanthine-guanine phosphoribosyltransferase (179 aa).

Diphosphate is bound by residues Lys-42 and Gly-43. Mg(2+) is bound by residues Glu-98 and Asp-99. Glu-102 serves as the catalytic Proton acceptor. Residues Lys-130, 151–152 (FV), and Asp-158 contribute to the GMP site. Diphosphate is bound at residue Arg-164.

This sequence belongs to the purine/pyrimidine phosphoribosyltransferase family. It depends on Mg(2+) as a cofactor.

The protein localises to the cytoplasm. The enzyme catalyses IMP + diphosphate = hypoxanthine + 5-phospho-alpha-D-ribose 1-diphosphate. The catalysed reaction is GMP + diphosphate = guanine + 5-phospho-alpha-D-ribose 1-diphosphate. It participates in purine metabolism; IMP biosynthesis via salvage pathway; IMP from hypoxanthine: step 1/1. It functions in the pathway purine metabolism; GMP biosynthesis via salvage pathway; GMP from guanine: step 1/1. Functionally, purine salvage pathway enzyme that catalyzes the transfer of the ribosyl-5-phosphate group from 5-phospho-alpha-D-ribose 1-diphosphate (PRPP) to the N9 position of the 6-oxopurines hypoxanthine and guanine to form the corresponding ribonucleotides IMP (inosine 5'-monophosphate) and GMP (guanosine 5'-monophosphate), with the release of PPi. This Staphylococcus aureus (strain COL) protein is Hypoxanthine-guanine phosphoribosyltransferase (hpt).